A 358-amino-acid polypeptide reads, in one-letter code: Heat-inducible transcription repressor HrcA (358 aa).

The protein belongs to the HrcA family.

Its function is as follows. Negative regulator of class I heat shock genes (grpE-dnaK-dnaJ and groELS operons). Prevents heat-shock induction of these operons. The protein is Heat-inducible transcription repressor HrcA of Caulobacter vibrioides (strain NA1000 / CB15N) (Caulobacter crescentus).